The sequence spans 406 residues: Cysteine desulfurase (406 aa).

N6-(pyridoxal phosphate)lysine is present on lysine 226. Residue cysteine 364 is the Cysteine persulfide intermediate of the active site.

This sequence belongs to the class-V pyridoxal-phosphate-dependent aminotransferase family. Csd subfamily. In terms of assembly, homodimer. Interacts with SufE and the SufBCD complex composed of SufB, SufC and SufD. The interaction with SufE is required to mediate the direct transfer of the sulfur atom from the S-sulfanylcysteine. The cofactor is pyridoxal 5'-phosphate.

It localises to the cytoplasm. The enzyme catalyses (sulfur carrier)-H + L-cysteine = (sulfur carrier)-SH + L-alanine. It catalyses the reaction L-selenocysteine + AH2 = hydrogenselenide + L-alanine + A + H(+). The protein operates within cofactor biosynthesis; iron-sulfur cluster biosynthesis. In terms of biological role, cysteine desulfurases mobilize the sulfur from L-cysteine to yield L-alanine, an essential step in sulfur metabolism for biosynthesis of a variety of sulfur-containing biomolecules. Component of the suf operon, which is activated and required under specific conditions such as oxidative stress and iron limitation. Acts as a potent selenocysteine lyase in vitro, that mobilizes selenium from L-selenocysteine. Selenocysteine lyase activity is however unsure in vivo. This is Cysteine desulfurase from Escherichia coli O17:K52:H18 (strain UMN026 / ExPEC).